We begin with the raw amino-acid sequence, 854 residues long: N-terminal acetyltransferase A complex subunit NAT1 (854 aa).

At serine 2 the chain carries N-acetylserine. TPR repeat units lie at residues glutamate 20 to histidine 53, valine 54 to alanine 87, proline 91 to asparagine 124, glutamine 126 to tryptophan 162, phenylalanine 241 to asparagine 274, isoleucine 384 to leucine 417, and arginine 452 to valine 485. The stretch at leucine 623–lysine 667 forms a coiled coil. The tract at residues lysine 626 to serine 668 is disordered. Serine 674 is modified (phosphoserine). One copy of the TPR 8 repeat lies at alanine 728–asparagine 761.

As to quaternary structure, component of the N-terminal acetyltransferase A (NatA) complex, which is composed of ARD1, NAT1 and NAT5. Can self-associate. NAT1 associates with the nascent polypeptide chain and the ribosome. The N-terminus is blocked.

The protein localises to the cytoplasm. Non-catalytic component of the NatA N-terminal acetyltransferase, which catalyzes acetylation of proteins beginning with Met-Ser, Met-Gly and Met-Ala. N-acetylation plays a role in normal eukaryotic translation and processing, protect against proteolytic degradation and protein turnover. NAT1 anchors ARD1 and NAT5 to the ribosome and may present the N termini of nascent polypeptides for acetylation. The protein is N-terminal acetyltransferase A complex subunit NAT1 (NAT1) of Saccharomyces cerevisiae (strain ATCC 204508 / S288c) (Baker's yeast).